The following is a 294-amino-acid chain: MVGQTEIPARPLEPALYLVATPIGNLADITLRALETLAAADIVACEDTRVSRVLLDRYGIRRRTTAYHEHNAGEAGPKLIAALQGGQSVALISDAGTPLVSDPGYRLVGEAIDHGIRVVPIPGPSAPLAALTASGLPSDAFLFAGFLPVKVGQRLTRLEALKAVPATLIFFESPRRLAESLGAMVEALGGERKAAIGRELTKTFEEMRTGTLRALADHYAAADTPKGEIVVCVGPAEAKADEPADIDRLLLSLAAEMPASKAASEAAKMTGGQKQALYRRLLELKDTSGEGDGG.

This sequence belongs to the methyltransferase superfamily. RsmI family.

It is found in the cytoplasm. It carries out the reaction cytidine(1402) in 16S rRNA + S-adenosyl-L-methionine = 2'-O-methylcytidine(1402) in 16S rRNA + S-adenosyl-L-homocysteine + H(+). Functionally, catalyzes the 2'-O-methylation of the ribose of cytidine 1402 (C1402) in 16S rRNA. The protein is Ribosomal RNA small subunit methyltransferase I of Mesorhizobium japonicum (strain LMG 29417 / CECT 9101 / MAFF 303099) (Mesorhizobium loti (strain MAFF 303099)).